The chain runs to 254 residues: Distal membrane-arm assembly complex protein 2 (254 aa).

A Phosphoserine modification is found at Ser-250.

The protein belongs to the ATP synthase subunit s family. In terms of assembly, interacts with incompletely assembled mitochondrial NADH:ubiquinone oxidoreductase complex (complex I).

Its subcellular location is the mitochondrion. Required for the assembly of the mitochondrial NADH:ubiquinone oxidoreductase complex (complex I). Involved in the assembly of the distal region of complex I. The sequence is that of Distal membrane-arm assembly complex protein 2 from Rattus norvegicus (Rat).